Consider the following 571-residue polypeptide: Proline--tRNA ligase (571 aa).

Belongs to the class-II aminoacyl-tRNA synthetase family. ProS type 1 subfamily. Homodimer.

It is found in the cytoplasm. The catalysed reaction is tRNA(Pro) + L-proline + ATP = L-prolyl-tRNA(Pro) + AMP + diphosphate. Catalyzes the attachment of proline to tRNA(Pro) in a two-step reaction: proline is first activated by ATP to form Pro-AMP and then transferred to the acceptor end of tRNA(Pro). As ProRS can inadvertently accommodate and process non-cognate amino acids such as alanine and cysteine, to avoid such errors it has two additional distinct editing activities against alanine. One activity is designated as 'pretransfer' editing and involves the tRNA(Pro)-independent hydrolysis of activated Ala-AMP. The other activity is designated 'posttransfer' editing and involves deacylation of mischarged Ala-tRNA(Pro). The misacylated Cys-tRNA(Pro) is not edited by ProRS. This chain is Proline--tRNA ligase, found in Ligilactobacillus salivarius (strain UCC118) (Lactobacillus salivarius).